The primary structure comprises 347 residues: Heat-inducible transcription repressor HrcA (347 aa).

Belongs to the HrcA family.

Negative regulator of class I heat shock genes (grpE-dnaK-dnaJ and groELS operons). Prevents heat-shock induction of these operons. This is Heat-inducible transcription repressor HrcA from Sphingopyxis alaskensis (strain DSM 13593 / LMG 18877 / RB2256) (Sphingomonas alaskensis).